Reading from the N-terminus, the 229-residue chain is Germin-like protein 2-4 (229 aa).

Residues 1 to 23 form the signal peptide; it reads MAHRRRCLLLLLAVLLPAMAARG. A disulfide bridge links Cys32 with Cys52. Asn57 carries N-linked (GlcNAc...) asparagine glycosylation. The Cupin type-1 domain occupies 66-213; sequence SGVRAAGNFS…AFGLTPAELR (148 aa). The Mn(2+) site is built by His115, His117, Glu122, and His161.

The protein belongs to the germin family. In terms of assembly, oligomer (believed to be a pentamer but probably hexamer).

It is found in the secreted. Its subcellular location is the extracellular space. It localises to the apoplast. Its function is as follows. May play a role in plant defense. Probably has no oxalate oxidase activity even if the active site is conserved. This is Germin-like protein 2-4 from Oryza sativa subsp. japonica (Rice).